The chain runs to 115 residues: Ribonuclease P protein component (115 aa).

Belongs to the RnpA family. Consists of a catalytic RNA component (M1 or rnpB) and a protein subunit.

The catalysed reaction is Endonucleolytic cleavage of RNA, removing 5'-extranucleotides from tRNA precursor.. Functionally, RNaseP catalyzes the removal of the 5'-leader sequence from pre-tRNA to produce the mature 5'-terminus. It can also cleave other RNA substrates such as 4.5S RNA. The protein component plays an auxiliary but essential role in vivo by binding to the 5'-leader sequence and broadening the substrate specificity of the ribozyme. The protein is Ribonuclease P protein component of Staphylococcus epidermidis (strain ATCC 35984 / DSM 28319 / BCRC 17069 / CCUG 31568 / BM 3577 / RP62A).